The following is a 333-amino-acid chain: Fructose-1,6-bisphosphatase class 1 (333 aa).

Positions 90, 112, 114, and 115 each coordinate Mg(2+). Substrate contacts are provided by residues 115–118 (DGSS), asparagine 207, and lysine 273. Residue glutamate 279 coordinates Mg(2+).

Belongs to the FBPase class 1 family. In terms of assembly, homotetramer. Requires Mg(2+) as cofactor.

It localises to the cytoplasm. It catalyses the reaction beta-D-fructose 1,6-bisphosphate + H2O = beta-D-fructose 6-phosphate + phosphate. It functions in the pathway carbohydrate biosynthesis; gluconeogenesis. The polypeptide is Fructose-1,6-bisphosphatase class 1 (Azoarcus sp. (strain BH72)).